An 82-amino-acid chain; its full sequence is Hydrogenase maturation factor HybG (82 aa).

This sequence belongs to the HupF/HypC family.

The protein operates within protein modification; [NiFe] hydrogenase maturation. In terms of biological role, involved in the maturation of [NiFe] hydrogenases. Involved in the biosynthesis of the Fe(CN)(2)CO cofactor. HybG delivers iron-bound CO(2) to HypD where reduction to CO probably occurs. In complex with HypD, accepts the cyanide ligand generated by HypF and HypE, and also coordinates the carbon monoxide ligand. This Escherichia coli O157:H7 protein is Hydrogenase maturation factor HybG (hybG).